A 219-amino-acid chain; its full sequence is Ribosomal RNA small subunit methyltransferase G (219 aa).

S-adenosyl-L-methionine contacts are provided by residues Gly85, Leu90, 136 to 137, and Arg151; that span reads VE.

Belongs to the methyltransferase superfamily. RNA methyltransferase RsmG family.

The protein resides in the cytoplasm. The catalysed reaction is guanosine(527) in 16S rRNA + S-adenosyl-L-methionine = N(7)-methylguanosine(527) in 16S rRNA + S-adenosyl-L-homocysteine. Functionally, specifically methylates the N7 position of guanine in position 527 of 16S rRNA. This Cellvibrio japonicus (strain Ueda107) (Pseudomonas fluorescens subsp. cellulosa) protein is Ribosomal RNA small subunit methyltransferase G.